A 63-amino-acid polypeptide reads, in one-letter code: Large ribosomal subunit protein uL29 (63 aa).

This sequence belongs to the universal ribosomal protein uL29 family.

The polypeptide is Large ribosomal subunit protein uL29 (Chromohalobacter salexigens (strain ATCC BAA-138 / DSM 3043 / CIP 106854 / NCIMB 13768 / 1H11)).